The primary structure comprises 94 residues: Selenoprotein K (94 aa).

A helical membrane pass occupies residues 20 to 42 (LSLITDFFWGIAEFVVLFFKTLL). The interval 48–94 (KRRSYGNSSDSRYDDGRGPPGNPPRRMGRINHLRGPSPPPMAGGUGR) is disordered. Position 92 (Sec92) is a non-standard amino acid, selenocysteine.

Belongs to the selenoprotein K family. Interacts with DERL1, DERL2, DERL3 and SELENOS. The SELENOK-SELENOS complex interacts with VCP. Interacts with ZDHHC6. Cleaved by CAPN2/m-calpain in resting macrophages but not in activated macrophages. Macrophage activation up-regulates expression of the calpain inhibitor CAST/calpastatin, resulting in inhibition of CAPN2 activity. In terms of processing, truncated SELENOK proteins produced by failed UGA/Sec decoding are ubiquitinated by the CRL2(KLHDC2) complex, which recognizes the diglycine (Gly-Gly) at the C-terminus of truncated SELENOK proteins. As to expression, highly expressed in heart.

The protein resides in the endoplasmic reticulum membrane. It is found in the cell membrane. Required for Ca(2+) flux in immune cells and plays a role in T-cell proliferation and in T-cell and neutrophil migration. Involved in endoplasmic reticulum-associated degradation (ERAD) of soluble glycosylated proteins. Required for palmitoylation and cell surface expression of CD36 and involved in macrophage uptake of low-density lipoprotein and in foam cell formation. Together with ZDHHC6, required for palmitoylation of ITPR1 in immune cells, leading to regulate ITPR1 stability and function. Plays a role in protection of cells from ER stress-induced apoptosis. Protects cells from oxidative stress when overexpressed in cardiomyocytes. In Homo sapiens (Human), this protein is Selenoprotein K.